Consider the following 158-residue polypeptide: Aspartate carbamoyltransferase regulatory chain (158 aa).

Cys-111, Cys-116, Cys-140, and Cys-143 together coordinate Zn(2+).

The protein belongs to the PyrI family. In terms of assembly, contains catalytic and regulatory chains. Zn(2+) is required as a cofactor.

Functionally, involved in allosteric regulation of aspartate carbamoyltransferase. The protein is Aspartate carbamoyltransferase regulatory chain of Metallosphaera sedula (strain ATCC 51363 / DSM 5348 / JCM 9185 / NBRC 15509 / TH2).